Consider the following 260-residue polypeptide: Triosephosphate isomerase (260 aa).

11–13 (NWK) is a substrate binding site. His103 serves as the catalytic Electrophile. Glu175 serves as the catalytic Proton acceptor. Substrate is bound by residues Gly181, Ser220, and 241-242 (GG).

Belongs to the triosephosphate isomerase family. As to quaternary structure, homodimer.

It localises to the cytoplasm. The catalysed reaction is D-glyceraldehyde 3-phosphate = dihydroxyacetone phosphate. The protein operates within carbohydrate biosynthesis; gluconeogenesis. It functions in the pathway carbohydrate degradation; glycolysis; D-glyceraldehyde 3-phosphate from glycerone phosphate: step 1/1. Its function is as follows. Involved in the gluconeogenesis. Catalyzes stereospecifically the conversion of dihydroxyacetone phosphate (DHAP) to D-glyceraldehyde-3-phosphate (G3P). This chain is Triosephosphate isomerase, found in Shewanella loihica (strain ATCC BAA-1088 / PV-4).